Reading from the N-terminus, the 384-residue chain is MERFVQFLRRGNGLMAASLAAGSCAEEVAKAEGAGCRDDAAALRLKGVAMATILVAGVVGVGLPLAGRKRRALRTDSAAFVAAKAFAAGVILATGFVHMLHDAEHALSSPCLPAHPWRSFPFPGFVAMSAALATLVLDFLATRFYEGKHRAETERVKAAAAAALAASSASDDDITVVTVTEDDNDNKAPLLQPHSHSHSHPHGHGHGHELAQPEGSGGEGEVPAQVRSVVVSQILEMGIVSHSVIIGLSLGVSRSPCTIRPLVAALSFHQFFEGFALGGCIAQAQFKTLSAAIMACFFAITTPAGIAAGAGVASFYNANSPRALVVEGILDSVSAGILIYMSLVDLIAADFLGGKMTGSTRQQVMAYIALFLGALSMSSLAIWA.

An N-terminal signal peptide occupies residues 1-25 (MERFVQFLRRGNGLMAASLAAGSCA). Over 26 to 46 (EEVAKAEGAGCRDDAAALRLK) the chain is Extracellular. Residues 47–67 (GVAMATILVAGVVGVGLPLAG) traverse the membrane as a helical segment. Topologically, residues 68 to 79 (RKRRALRTDSAA) are cytoplasmic. A helical transmembrane segment spans residues 80–100 (FVAAKAFAAGVILATGFVHML). Residues 101–119 (HDAEHALSSPCLPAHPWRS) lie on the Extracellular side of the membrane. Residues 120-140 (FPFPGFVAMSAALATLVLDFL) form a helical membrane-spanning segment. At 141-227 (ATRFYEGKHR…GEGEVPAQVR (87 aa)) the chain is on the cytoplasmic side. Positions 185-222 (DNKAPLLQPHSHSHSHPHGHGHGHELAQPEGSGGEGEV) are disordered. Residues 195 to 205 (SHSHSHPHGHG) are compositionally biased toward basic residues. The helical transmembrane segment at 228–248 (SVVVSQILEMGIVSHSVIIGL) threads the bilayer. Residues 249 to 261 (SLGVSRSPCTIRP) lie on the Extracellular side of the membrane. A helical membrane pass occupies residues 262 to 282 (LVAALSFHQFFEGFALGGCIA). Topologically, residues 283 to 291 (QAQFKTLSA) are cytoplasmic. A helical transmembrane segment spans residues 292 to 312 (AIMACFFAITTPAGIAAGAGV). Residues 313-323 (ASFYNANSPRA) lie on the Extracellular side of the membrane. Residues 324-344 (LVVEGILDSVSAGILIYMSLV) form a helical membrane-spanning segment. Residues 345-363 (DLIAADFLGGKMTGSTRQQ) lie on the Cytoplasmic side of the membrane. Residues 364 to 384 (VMAYIALFLGALSMSSLAIWA) traverse the membrane as a helical segment.

It belongs to the ZIP transporter (TC 2.A.5) family.

The protein localises to the cell membrane. In terms of biological role, zinc transporter that may be involved in zinc uptake from the rhizosphere. In Oryza sativa subsp. japonica (Rice), this protein is Zinc transporter 7 (ZIP7).